We begin with the raw amino-acid sequence, 207 residues long: Urease accessory protein UreG (207 aa).

12 to 19 (GPVGAGKT) is a binding site for GTP.

It belongs to the SIMIBI class G3E GTPase family. UreG subfamily. As to quaternary structure, homodimer. UreD, UreF and UreG form a complex that acts as a GTP-hydrolysis-dependent molecular chaperone, activating the urease apoprotein by helping to assemble the nickel containing metallocenter of UreC. The UreE protein probably delivers the nickel.

It localises to the cytoplasm. Facilitates the functional incorporation of the urease nickel metallocenter. This process requires GTP hydrolysis, probably effectuated by UreG. The protein is Urease accessory protein UreG of Cereibacter sphaeroides (strain ATCC 17023 / DSM 158 / JCM 6121 / CCUG 31486 / LMG 2827 / NBRC 12203 / NCIMB 8253 / ATH 2.4.1.) (Rhodobacter sphaeroides).